A 441-amino-acid polypeptide reads, in one-letter code: uncharacterized protein (441 aa).

12 consecutive transmembrane segments (helical) span residues 21–41, 51–71, 94–114, 118–138, 150–170, 195–215, 239–259, 260–280, 291–311, 334–354, 363–383, and 419–439; these read VVVALTFSAIVGGLVAGMSLG, LGGGATIALSYAMLGTFAVAI, AASTTGLKYAVLVALVLVTMS, VIPVHIAFIPILIPPLLGVFA, VLTFGLITPYMVLPVGFGGIF, AMLLPGAGMIFGLLLAIFVSY, QHILVAALGIIAALGVQLYTG, SMIIGALAGFMVFTFGGVIAW, VHMMAMIGFIMIAAAGFAAVM, LAALLMLVVGLLVTMGIGSSF, IYVPLSLAFGFSPMATIALVG, and VVPTFIHYNIPLIIFGWIAAM.

The protein resides in the cell membrane. This is an uncharacterized protein from Vibrio parahaemolyticus serotype O3:K6 (strain RIMD 2210633).